The following is a 287-amino-acid chain: MINLRQQIPHYLRLMRFDKPVGIFLLLWPTLWAVWIAAKGAPSFKIAVIFIAGSVVMRAAGCIVNDFADRHLDKHVQRTQMRPLASGSVSVTEAMLLFAVLSLIAFTLVLLLNRLTVELAVIGILLALVYPFLKRFTHLPQLWLGIAFSWSIPMAFAATVGHVPAVAWLLFFAAVLWPIVYDTQYAMIDREDDVKVGIKSTAILFGRYDRLMIGLLQGSVLLTFGLLGWYLRFNYWFYLGLLVALGLMCYQQFLIRHRKPPDCFAAFRNNNWVGFFIFLGILLTYRN.

9 helical membrane passes run valine 21 to alanine 41, phenylalanine 44 to valine 64, valine 91 to leucine 111, leucine 112 to phenylalanine 132, leucine 139 to threonine 159, valine 160 to valine 180, leucine 211 to leucine 231, tyrosine 235 to isoleucine 255, and cysteine 263 to leucine 283.

It belongs to the UbiA prenyltransferase family. Requires Mg(2+) as cofactor.

The protein localises to the cell inner membrane. It carries out the reaction all-trans-octaprenyl diphosphate + 4-hydroxybenzoate = 4-hydroxy-3-(all-trans-octaprenyl)benzoate + diphosphate. Its pathway is cofactor biosynthesis; ubiquinone biosynthesis. Its function is as follows. Catalyzes the prenylation of para-hydroxybenzoate (PHB) with an all-trans polyprenyl group. Mediates the second step in the final reaction sequence of ubiquinone-8 (UQ-8) biosynthesis, which is the condensation of the polyisoprenoid side chain with PHB, generating the first membrane-bound Q intermediate 3-octaprenyl-4-hydroxybenzoate. In Coxiella burnetii (strain CbuK_Q154) (Coxiella burnetii (strain Q154)), this protein is 4-hydroxybenzoate octaprenyltransferase.